The chain runs to 719 residues: ATP-dependent RNA helicase SUV3 homolog, mitochondrial (719 aa).

A mitochondrion-targeting transit peptide spans 1–18 (MRRASGVLRVLGGLTQRC). The tract at residues 16-42 (QRCSTSSTPSSSRFPAMNSRRKRNSVR) is disordered. Residues 181–319 (EARSVTRKIF…PAAIDIVKKL (139 aa)) form the Helicase ATP-binding domain. Residue 194-201 (GPTNSGKT) coordinates ATP. A Helicase C-terminal domain is found at 343-499 (KAIESYSNIE…PTYDQIETFS (157 aa)). Residues 662–692 (SKAAGSSKSSEGKRENPSKSEREKPNKRSSI) form a disordered region. The segment covering 671–687 (SEGKRENPSKSEREKPN) has biased composition (basic and acidic residues). A coiled-coil region spans residues 693 to 717 (LEALLKRADISEDDLEQLREELNKN).

This sequence belongs to the helicase family. Mg(2+) serves as cofactor. It depends on Mn(2+) as a cofactor.

The protein resides in the mitochondrion matrix. It localises to the nucleus. The enzyme catalyses ATP + H2O = ADP + phosphate + H(+). Its function is as follows. ATPase and DNA/RNA helicase able to unwind DNA/DNA, DNA/RNA and RNA/RNA duplexes in the 5'-3' direction. The polypeptide is ATP-dependent RNA helicase SUV3 homolog, mitochondrial (Caenorhabditis elegans).